Consider the following 361-residue polypeptide: G-protein coupled receptor 52 (361 aa).

The Extracellular segment spans residues 1–44; that stretch reads MNESRWTEWRILNMSSSIVNVSEHHSCPLGFGHYSVEDVCIFET. 3 N-linked (GlcNAc...) asparagine glycosylation sites follow: N2, N13, and N20. The helical transmembrane segment at 45–65 threads the bilayer; the sequence is VVIVLLTFLIISGNLTVIFVF. Topologically, residues 66-81 are cytoplasmic; that stretch reads HCAPLLHHYTTSYFIQ. The chain crosses the membrane as a helical span at residues 82–102; the sequence is TMAYADLLVGVTCLVPTLSLL. Over 103-115 the chain is Extracellular; it reads HYSTGVHESLTCQ. An intrachain disulfide couples C114 to C193. Residues 116-136 traverse the membrane as a helical segment; the sequence is VFGYIISVLKSVSMACLACIS. The Cytoplasmic segment spans residues 137 to 159; sequence VDRYLAITKPLSYNQLVTPCRLR. Residues 160–180 form a helical membrane-spanning segment; it reads ICIIMIWIYSCLIFLPSFFGW. At 181–205 the chain is on the extracellular side; that stretch reads GKPGYHGDIFEWCATSWLTSAYFTC. Residues 206 to 226 form a helical membrane-spanning segment; that stretch reads FIVCLLYAPAALVVCFTYFHI. Over 227 to 265 the chain is Cytoplasmic; it reads FKICRQHTKEINDRRARFPSHEVEASREAGHSPDRRYAM. Residues 266-286 form a helical membrane-spanning segment; the sequence is VLFRITSVFYMLWLPYIIYFL. Over 287–296 the chain is Extracellular; it reads LESSRVLDNP. A helical transmembrane segment spans residues 297–317; it reads TLSFLTTWLAISNSFCNCVIY. Residues 318–361 lie on the Cytoplasmic side of the membrane; sequence SLSNSVFRLGLRRLSETMCTSCVCAKDQEAQDPKPRRRANSCSI.

It belongs to the G-protein coupled receptor 1 family. Expressed in brain, especially in striatum. Expressed in the striatum, nucleus accumbens, and lateral globus pallidus.

It is found in the cell membrane. Functionally, G- protein coupled receptor activated by antipsychotics reserpine leading to an increase in intracellular cAMP and its internalization. May play a role in locomotor activity through modulation of dopamine, NMDA and ADORA2A-induced locomotor activity. These behavioral changes are accompanied by modulation of the dopamine receptor signaling pathway in striatum. Modulates HTT level via cAMP-dependent but PKA independent mechanisms throught activation of RAB39B that translocates HTT to the endoplasmic reticulum, thus avoiding proteasome degradation. The polypeptide is G-protein coupled receptor 52 (Mus musculus (Mouse)).